Here is a 210-residue protein sequence, read N- to C-terminus: MPSRSKSSQRWLKEHFADPYVKKAQAEGMRSRAAYKLEELLQRDRLLKPGMVVVDLGAAPGGWSQQVRKSMGDSGRVVALDILDMPALAGVEFLHGDFREQAVLSQFEAMLGDVPVDLVLSDMAPNKSGMDAVDQPRMMHLAELAMEFADTHLKPGGAFLIKLFQGVGSDDYIRELRRRYEKVTIRKPAASRKRSPEVYALGQGKRVQIK.

S-adenosyl-L-methionine-binding residues include Gly-61, Trp-63, Asp-81, Asp-97, and Asp-122. Lys-162 functions as the Proton acceptor in the catalytic mechanism.

It belongs to the class I-like SAM-binding methyltransferase superfamily. RNA methyltransferase RlmE family.

The protein localises to the cytoplasm. It carries out the reaction uridine(2552) in 23S rRNA + S-adenosyl-L-methionine = 2'-O-methyluridine(2552) in 23S rRNA + S-adenosyl-L-homocysteine + H(+). In terms of biological role, specifically methylates the uridine in position 2552 of 23S rRNA at the 2'-O position of the ribose in the fully assembled 50S ribosomal subunit. The chain is Ribosomal RNA large subunit methyltransferase E from Xanthomonas axonopodis pv. citri (strain 306).